Reading from the N-terminus, the 172-residue chain is UPF0254 protein Mlab_1743 (172 aa).

It belongs to the UPF0254 family.

This Methanocorpusculum labreanum (strain ATCC 43576 / DSM 4855 / Z) protein is UPF0254 protein Mlab_1743.